The sequence spans 156 residues: Ribosome-binding factor A (156 aa).

Over residues 125–138 (RVREGAKHAGDPDP) the composition is skewed to basic and acidic residues. Residues 125 to 156 (RVREGAKHAGDPDPYRVGGAEDTDGDTDGDER) are disordered. The segment covering 145 to 156 (EDTDGDTDGDER) has biased composition (acidic residues).

It belongs to the RbfA family. Monomer. Binds 30S ribosomal subunits, but not 50S ribosomal subunits or 70S ribosomes.

It localises to the cytoplasm. In terms of biological role, one of several proteins that assist in the late maturation steps of the functional core of the 30S ribosomal subunit. Associates with free 30S ribosomal subunits (but not with 30S subunits that are part of 70S ribosomes or polysomes). Required for efficient processing of 16S rRNA. May interact with the 5'-terminal helix region of 16S rRNA. The protein is Ribosome-binding factor A of Mycolicibacterium smegmatis (strain ATCC 700084 / mc(2)155) (Mycobacterium smegmatis).